We begin with the raw amino-acid sequence, 387 residues long: WD repeat-containing protein 89 (387 aa).

6 WD repeats span residues 21–65 (KEPT…VLRE), 68–107 (GYPG…EKPV), 112–156 (GYPS…QNLS), 168–208 (THSD…EEDA), 214–254 (NSIS…TDEP), and 319–358 (GHAA…KTFT).

This Homo sapiens (Human) protein is WD repeat-containing protein 89 (WDR89).